Consider the following 391-residue polypeptide: Probable inactive allantoicase (391 aa).

Belongs to the allantoicase family.

In terms of biological role, the function of this enzyme is unclear as allantoicase activity is not known to exist in mammals. In Homo sapiens (Human), this protein is Probable inactive allantoicase.